Reading from the N-terminus, the 614-residue chain is MSRSAAASGGPRRPDQHLPPAPCGASGPPETFRTESDGAGTMNKLRQSLRRRKPAYVPEASRPHQWQADEDAVRKGTCSFPVRYLGHVEVEESRGMHVCEDAVKKLKAMGRKSVKSVLWVSADGLRVVDDKTKDLLVDQTIEKVSFCAPDRNLDKAFSYICRDGTTRRWICHCFLALKDSGERLSHAVGCAFAACLERKQRREKECGVTAAFDASRTSFAREGSFRLSGGGRPAEREAGDKKKAEAAAAPAVAPGPAQPGHVSPTPATTSPGEKGEAGTPVAAGTTAAAIPRRHAPLEQLVRQGSFRGFPALSQKNSPFKRQLSLRLNELPSTLQRRTDFQVKGTVPEMEPPGTGDSDGISALCTQISSSFASAGAPVPGPPSATTGTSAWGEPSVPAATAFQPGHKRTPSEAERWLEEVSQVAKAQQQQQQQQQQQQQQQQQQQQQQQQQATSVPPMPTMAPTLQPFSTPVGPFDTAAAQVAVFLPPTHMQPPFVPAYPGLGYPPMPRVPVVGITPSQMVANAFCSAAQLQPQPATLLGKAGAFPPPTAPSAPGGQARPRPNGAPWPPEPAPAPAPELDPFEAQWAALEGKPAVEKPSNPFSGDLQKTFEIEL.

Disordered stretches follow at residues 1-68 (MSRS…QWQA), 223-283 (GSFR…PVAA), 371-420 (FASA…LEEV), 448-468 (QQQQ…LQPF), and 539-614 (LGKA…EIEL). The 150-residue stretch at 74 to 223 (RKGTCSFPVR…ASRTSFAREG (150 aa)) folds into the PID domain. Residues Ser-224 and Ser-228 each carry the phosphoserine modification. Residues 233–245 (PAEREAGDKKKAE) are compositionally biased toward basic and acidic residues. Residues 246–260 (AAAAPAVAPGPAQPG) show a composition bias toward low complexity. Ser-263 is subject to Phosphoserine. The residue at position 279 (Thr-279) is a Phosphothreonine. Residues 371–390 (FASAGAPVPGPPSATTGTSA) show a composition bias toward low complexity. The span at 409-418 (TPSEAERWLE) shows a compositional bias: basic and acidic residues. Residue Ser-411 is modified to Phosphoserine. A compositionally biased stretch (pro residues) spans 563–578 (NGAPWPPEPAPAPAPE).

Associates with EPS15 and NOTCH1. Interacts (via PTB domain) with MAP3K7IP2 (via C-terminal). Interacts (via C-terminal) with TRAF6 (via TRAF domains).

Its subcellular location is the cytoplasm. In terms of biological role, plays a role in the process of neurogenesis. Required throughout embryonic neurogenesis to maintain neural progenitor cells, also called radial glial cells (RGCs), by allowing their daughter cells to choose progenitor over neuronal cell fate. Not required for the proliferation of neural progenitor cells before the onset of embryonic neurogenesis. Also required postnatally in the subventricular zone (SVZ) neurogenesis by regulating SVZ neuroblasts survival and ependymal wall integrity. Negative regulator of NF-kappa-B signaling pathway. The inhibition of NF-kappa-B activation is mediated at least in part, by preventing MAP3K7IP2 to interact with polyubiquitin chains of TRAF6 and RIPK1 and by stimulating the 'Lys-48'-linked polyubiquitination and degradation of TRAF6 in cortical neurons. This Rattus norvegicus (Rat) protein is Numb-like protein (Numbl).